We begin with the raw amino-acid sequence, 512 residues long: Monocarboxylate transporter 10 (512 aa).

The interval methionine 1–glutamate 44 is disordered. Residues methionine 1–glutamate 63 lie on the Cytoplasmic side of the membrane. A helical transmembrane segment spans residues glycine 64–isoleucine 84. Residues glutamine 85–threonine 111 are Extracellular-facing. The chain crosses the membrane as a helical span at residues alanine 112–phenylalanine 132. Residues threonine 133–threonine 141 lie on the Cytoplasmic side of the membrane. The helical transmembrane segment at alanine 142–isoleucine 162 threads the bilayer. Topologically, residues glutamate 163 to threonine 168 are extracellular. Residues tyrosine 169 to glycine 189 form a helical membrane-spanning segment. At histidine 190–glycine 201 the chain is on the cytoplasmic side. Residues isoleucine 202–isoleucine 222 form a helical membrane-spanning segment. Over serine 223–arginine 232 the chain is Extracellular. Residues isoleucine 233–proline 253 traverse the membrane as a helical segment. The Cytoplasmic portion of the chain corresponds to serine 254–alanine 291. Serine 260 carries the post-translational modification Phosphoserine. The chain crosses the membrane as a helical span at residues valine 292 to methionine 312. Topologically, residues asparagine 313–glutamate 326 are extracellular. Residues valine 327–alanine 347 traverse the membrane as a helical segment. Residues aspartate 348–serine 362 lie on the Cytoplasmic side of the membrane. The helical transmembrane segment at phenylalanine 363–isoleucine 383 threads the bilayer. Residue alanine 384 is a topological domain, extracellular. The helical transmembrane segment at valine 385–phenylalanine 405 threads the bilayer. The Cytoplasmic portion of the chain corresponds to glutamate 406–alanine 416. A helical membrane pass occupies residues isoleucine 417 to leucine 437. Residues leucine 438–alanine 448 lie on the Extracellular side of the membrane. The helical transmembrane segment at phenylalanine 449–isoleucine 469 threads the bilayer. Over histidine 470–isoleucine 512 the chain is Cytoplasmic. Phosphoserine is present on residues serine 495, serine 498, serine 500, and serine 501.

It belongs to the major facilitator superfamily. Monocarboxylate porter (TC 2.A.1.13) family. Not N-glycosylated. As to expression, highly expressed in small intestine, particularly in jejunum and ileum, scarcely in colon and substantially in kidney, liver and skeletal muscle. In the brain expression is low and appears to be restricted to a subset of neurons, microglia cells, and oligodendrocytes.

The protein resides in the cell membrane. The protein localises to the basolateral cell membrane. It catalyses the reaction L-tryptophan(in) = L-tryptophan(out). The catalysed reaction is L-tyrosine(in) = L-tyrosine(out). It carries out the reaction L-phenylalanine(in) = L-phenylalanine(out). The enzyme catalyses 3,3',5-triiodo-L-thyronine(out) = 3,3',5-triiodo-L-thyronine(in). It catalyses the reaction L-thyroxine(out) = L-thyroxine(in). Sodium- and proton-independent thyroid hormones and aromatic acids transporter. Mediates both uptake and efflux of 3,5,3'-triiodothyronine (T3) and 3,5,3',5'-tetraiodothyronine (T4) with high affinity, suggesting a role in the homeostasis of thyroid hormone levels. Responsible for low affinity bidirectional transport of the aromatic amino acids, such as phenylalanine, tyrosine, tryptophan and L-3,4-dihydroxyphenylalanine (L-dopa). Plays an important role in homeostasis of aromatic amino acids. The chain is Monocarboxylate transporter 10 (Slc16a10) from Mus musculus (Mouse).